The sequence spans 143 residues: Lysozyme C (143 aa).

The first 15 residues, 1–15 (MRCLLLLLLVPVPGA), serve as a signal peptide directing secretion. The 128-residue stretch at 16-143 (KVFERCEWAR…LSSYVAGCGV (128 aa)) folds into the C-type lysozyme domain. Intrachain disulfides connect Cys-21–Cys-141, Cys-45–Cys-129, Cys-79–Cys-94, and Cys-90–Cys-108. Residues Glu-50 and Asp-67 contribute to the active site.

Belongs to the glycosyl hydrolase 22 family. As to quaternary structure, monomer.

Its subcellular location is the secreted. The catalysed reaction is Hydrolysis of (1-&gt;4)-beta-linkages between N-acetylmuramic acid and N-acetyl-D-glucosamine residues in a peptidoglycan and between N-acetyl-D-glucosamine residues in chitodextrins.. Functionally, lysozymes have primarily a bacteriolytic function; those in tissues and body fluids are associated with the monocyte-macrophage system and enhance the activity of immunoagents. The chain is Lysozyme C (lys) from Scophthalmus maximus (Turbot).